Consider the following 582-residue polypeptide: MKSIILFVLSLLLILEKQAAVMGQKGGSKGQLSSGSSRFPHRHRSQHYSGQKDKQHTESKGSFSIQHTYHVDANDHDRTRKSQQYYLNAQHKTTKSKQHLRRRQRLLNYKQKGRGRVKPKRHFHLIVIHRKGGQVHHGTQNPSQDQGNSPSGKGIFRQYSNTEKRLWVHGLSKEQASASGAQKGRTQGGSQSSYVLQTEELVVNKQQLETKNSHQNKGHYQNVVDVREEHSGKLQTSLHPAHQDRLQHGPKDIFTTQDELLVYNKNQHQTKNLNQDQEHGQKAHKISYQSSRTEERQLNHGEKSVQKDVSKGSISIQTEEKIHGKSQNQVTIPSQDQEHGHKENKISYQSSSAEERRLNSGEKGIQKGVXKGSISIQTEEKIYGKSQNQVTIPSQDQEHGHKENKISYQSSSAEERRLNSGEKGIQKGVXKGSISIQTEEKIYGKSQNQVTIPSQDQEHGHKENKISYQSSSTEQRQLNYGRKSIQKDVIQSSLSFQTEKLVEGKSQIQTPNPNQGQWSGQNAKGNSGKSADGEQDLLSHEQEGRYQQEFSGAHNTVNIEHEVAYDDLLTQQYNEDRNPIST.

The first 23 residues, 1–23 (MKSIILFVLSLLLILEKQAAVMG), serve as a signal peptide directing secretion. 5 disordered regions span residues 25 to 62 (KGGS…SKGS), 131 to 156 (KGGQ…KGIF), 173 to 192 (KEQA…GSQS), 272 to 477 (NLNQ…EQRQ), and 502 to 554 (VEGK…SGAH). Positions 50 to 59 (GQKDKQHTES) are enriched in basic and acidic residues. Composition is skewed to polar residues over residues 137–151 (HGTQ…NSPS) and 174–192 (EQAS…GSQS). Positions 292–310 (RTEERQLNHGEKSVQKDVS) are enriched in basic and acidic residues. The span at 325 to 335 (KSQNQVTIPSQ) shows a compositional bias: polar residues. A compositionally biased stretch (basic and acidic residues) spans 336-345 (DQEHGHKENK). Polar residues predominate over residues 385-395 (KSQNQVTIPSQ). Residues 396–405 (DQEHGHKENK) are compositionally biased toward basic and acidic residues. The span at 445 to 455 (KSQNQVTIPSQ) shows a compositional bias: polar residues. The segment covering 456–465 (DQEHGHKENK) has biased composition (basic and acidic residues). Polar residues-rich tracts occupy residues 466–477 (ISYQSSSTEQRQ) and 506–529 (SQIQ…NSGK). Over residues 537 to 546 (LLSHEQEGRY) the composition is skewed to basic and acidic residues.

It belongs to the semenogelin family. Interacts with SERPINA5.

Its subcellular location is the secreted. In terms of biological role, participates in the formation of a gel matrix (sperm coagulum) entrapping the accessory gland secretions and ejaculated spermatozoa. In Macaca nemestrina (Pig-tailed macaque), this protein is Semenogelin-2 (SEMG2).